A 61-amino-acid polypeptide reads, in one-letter code: Small ribosomal subunit protein uS14 (61 aa).

The Zn(2+) site is built by C24, C27, C40, and C43.

This sequence belongs to the universal ribosomal protein uS14 family. Zinc-binding uS14 subfamily. As to quaternary structure, part of the 30S ribosomal subunit. Contacts proteins S3 and S10. Requires Zn(2+) as cofactor.

Binds 16S rRNA, required for the assembly of 30S particles and may also be responsible for determining the conformation of the 16S rRNA at the A site. The sequence is that of Small ribosomal subunit protein uS14 from Thermus thermophilus (strain ATCC BAA-163 / DSM 7039 / HB27).